Reading from the N-terminus, the 450-residue chain is Homogentisate 1,2-dioxygenase (450 aa).

The active-site Proton acceptor is the His-304. 2 residues coordinate Fe cation: His-347 and Glu-353. Homogentisate contacts are provided by Tyr-362 and His-383. His-383 provides a ligand contact to Fe cation.

The protein belongs to the homogentisate dioxygenase family. Hexamer; dimer of trimers. The cofactor is Fe cation.

The enzyme catalyses homogentisate + O2 = 4-maleylacetoacetate + H(+). The protein operates within amino-acid degradation; L-phenylalanine degradation; acetoacetate and fumarate from L-phenylalanine: step 4/6. Involved in the catabolism of homogentisate (2,5-dihydroxyphenylacetate or 2,5-OH-PhAc), a central intermediate in the degradation of phenylalanine and tyrosine. Catalyzes the oxidative ring cleavage of the aromatic ring of homogentisate to yield maleylacetoacetate. This Burkholderia thailandensis (strain ATCC 700388 / DSM 13276 / CCUG 48851 / CIP 106301 / E264) protein is Homogentisate 1,2-dioxygenase.